The following is a 333-amino-acid chain: Photosystem II assembly lipoprotein Ycf48 (333 aa).

The N-terminal stretch at 1-23 (MTRFVSSAINLLLVLVLGVSLSG) is a signal peptide. C24 carries N-palmitoyl cysteine lipidation. A lipid anchor (S-diacylglycerol cysteine) is attached at C24.

It belongs to the Ycf48 family. Part of early PSII assembly complexes which includes D1 (psbA) and PsbI; not found in mature PSII. Binds to the lumenal side of PSII complexes. Interacts with YidC.

The protein resides in the cellular thylakoid membrane. A factor required for optimal assembly of photosystem II (PSII), acting in the early stages of PSII assembly. Also plays a role in replacement of photodamaged D1 (psbA). Assists YidC in synthesis of chlorophyll-binding proteins. This is Photosystem II assembly lipoprotein Ycf48 from Parasynechococcus marenigrum (strain WH8102).